The sequence spans 84 residues: NAD(P)H-quinone oxidoreductase subunit O (84 aa).

The protein belongs to the complex I NdhO subunit family. As to quaternary structure, NDH-1 can be composed of about 15 different subunits; different subcomplexes with different compositions have been identified which probably have different functions.

It localises to the cellular thylakoid membrane. It carries out the reaction a plastoquinone + NADH + (n+1) H(+)(in) = a plastoquinol + NAD(+) + n H(+)(out). It catalyses the reaction a plastoquinone + NADPH + (n+1) H(+)(in) = a plastoquinol + NADP(+) + n H(+)(out). NDH-1 shuttles electrons from an unknown electron donor, via FMN and iron-sulfur (Fe-S) centers, to quinones in the respiratory and/or the photosynthetic chain. The immediate electron acceptor for the enzyme in this species is believed to be plastoquinone. Couples the redox reaction to proton translocation, and thus conserves the redox energy in a proton gradient. Cyanobacterial NDH-1 also plays a role in inorganic carbon-concentration. The protein is NAD(P)H-quinone oxidoreductase subunit O of Parasynechococcus marenigrum (strain WH8102).